The primary structure comprises 164 residues: MTPLRSGIVAAVAALIADQASKLWLLFVFDIGHRGAVRVTPFFDLVLAWNTGISYGWFQTDSPVGATILLAIKAGAVVLLAIWMARSQTRLATIGLGLIIGGAIGNAIDRFAYGAVVDFVLFHVPLAGKTYSWYVFNLADVAIVAGVIALLYDSFLRTPAAKAP.

The next 4 helical transmembrane spans lie at 8–28 (IVAA…LLFV), 39–59 (VTPF…GWFQ), 64–84 (VGAT…AIWM), and 91–111 (LATI…IDRF). Active-site residues include aspartate 118 and aspartate 140. The helical transmembrane segment at 131-151 (YSWYVFNLADVAIVAGVIALL) threads the bilayer.

It belongs to the peptidase A8 family.

The protein localises to the cell inner membrane. The enzyme catalyses Release of signal peptides from bacterial membrane prolipoproteins. Hydrolyzes -Xaa-Yaa-Zaa-|-(S,diacylglyceryl)Cys-, in which Xaa is hydrophobic (preferably Leu), and Yaa (Ala or Ser) and Zaa (Gly or Ala) have small, neutral side chains.. The protein operates within protein modification; lipoprotein biosynthesis (signal peptide cleavage). Its function is as follows. This protein specifically catalyzes the removal of signal peptides from prolipoproteins. This Nitrobacter hamburgensis (strain DSM 10229 / NCIMB 13809 / X14) protein is Lipoprotein signal peptidase.